We begin with the raw amino-acid sequence, 786 residues long: Signal transducer and activator of transcription 5B (786 aa).

Tyr90 bears the Phosphotyrosine mark. Residue Ser128 is modified to Phosphoserine. One can recognise an SH2 domain in the interval Trp589–Val686. Tyr682 and Tyr699 each carry phosphotyrosine.

This sequence belongs to the transcription factor STAT family. As to quaternary structure, upon activation, forms a homodimer or a heterodimer with a related family member. Binds NR3C1. Interacts with NCOA1. Interacts with NMI. Interacts with SOCS7. Interacts (via SH2 domain) with INSR. Interacts with CPEB3; this inhibits STAT5B-mediated transcriptional activation. Post-translationally, tyrosine phosphorylated in response to signaling via activated KIT, resulting in translocation to the nucleus. Tyrosine phosphorylated in response to signaling via activated FLT3; wild-type FLT3 results in much weaker phosphorylation than constitutively activated mutant FLT3. Alternatively, can be phosphorylated by JAK2. Phosphorylation at Tyr-699 by PTK6 or HCK leads to an increase of its transcriptional activity.

Its subcellular location is the cytoplasm. The protein resides in the nucleus. Carries out a dual function: signal transduction and activation of transcription. Mediates cellular responses to the cytokine KITLG/SCF and other growth factors. Binds to the GAS element and activates PRL-induced transcription. Positively regulates hematopoietic/erythroid differentiation. The polypeptide is Signal transducer and activator of transcription 5B (Stat5b) (Rattus norvegicus (Rat)).